A 267-amino-acid chain; its full sequence is Electron transfer flavoprotein subunit beta (267 aa).

The protein belongs to the ETF beta-subunit/FixA family. As to quaternary structure, heterodimer of an alpha and a beta subunit.

Participates in the electron transfer process during N,N-dimethylglycine (DMG) degradation to sarcosine. The polypeptide is Electron transfer flavoprotein subunit beta (Chromohalobacter salexigens (strain ATCC BAA-138 / DSM 3043 / CIP 106854 / NCIMB 13768 / 1H11)).